Consider the following 489-residue polypeptide: Rhamnulokinase (489 aa).

ATP is bound at residue 13 to 17 (ASSGR). A disulfide bond links C68 and C222. Substrate-binding positions include G83 and 236–238 (HDT). D237 serves as the catalytic Proton acceptor. T259 contacts ATP. Residue N296 coordinates substrate. ATP is bound at residue Q304. Cysteines 353 and 370 form a disulfide. G402 lines the ATP pocket. A disulfide bridge links C413 with C417.

Belongs to the rhamnulokinase family. The cofactor is Mg(2+).

The catalysed reaction is L-rhamnulose + ATP = L-rhamnulose 1-phosphate + ADP + H(+). It functions in the pathway carbohydrate degradation; L-rhamnose degradation; glycerone phosphate from L-rhamnose: step 2/3. Its function is as follows. Involved in the catabolism of L-rhamnose (6-deoxy-L-mannose). Catalyzes the transfer of the gamma-phosphate group from ATP to the 1-hydroxyl group of L-rhamnulose to yield L-rhamnulose 1-phosphate. This is Rhamnulokinase from Salmonella typhi.